Here is a 122-residue protein sequence, read N- to C-terminus: Large ribosomal subunit protein uL14c (122 aa).

Belongs to the universal ribosomal protein uL14 family. As to quaternary structure, part of the 50S ribosomal subunit.

Its subcellular location is the plastid. Its function is as follows. Binds to 23S rRNA. The sequence is that of Large ribosomal subunit protein uL14c from Cuscuta reflexa (Southern Asian dodder).